Reading from the N-terminus, the 229-residue chain is UPF0173 metal-dependent hydrolase SAR1785 (229 aa).

It belongs to the UPF0173 family.

The protein is UPF0173 metal-dependent hydrolase SAR1785 of Staphylococcus aureus (strain MRSA252).